Reading from the N-terminus, the 378-residue chain is Anhydro-N-acetylmuramic acid kinase (378 aa).

22-29 lines the ATP pocket; sequence GTSLDGAD.

Belongs to the anhydro-N-acetylmuramic acid kinase family.

The catalysed reaction is 1,6-anhydro-N-acetyl-beta-muramate + ATP + H2O = N-acetyl-D-muramate 6-phosphate + ADP + H(+). The protein operates within amino-sugar metabolism; 1,6-anhydro-N-acetylmuramate degradation. It functions in the pathway cell wall biogenesis; peptidoglycan recycling. Functionally, catalyzes the specific phosphorylation of 1,6-anhydro-N-acetylmuramic acid (anhMurNAc) with the simultaneous cleavage of the 1,6-anhydro ring, generating MurNAc-6-P. Is required for the utilization of anhMurNAc either imported from the medium or derived from its own cell wall murein, and thus plays a role in cell wall recycling. This chain is Anhydro-N-acetylmuramic acid kinase, found in Bordetella petrii (strain ATCC BAA-461 / DSM 12804 / CCUG 43448).